The primary structure comprises 146 residues: Large ribosomal subunit protein uL16 (146 aa).

It belongs to the universal ribosomal protein uL16 family. In terms of assembly, part of the 50S ribosomal subunit.

Its function is as follows. Binds 23S rRNA and is also seen to make contacts with the A and possibly P site tRNAs. In Lactobacillus helveticus (strain DPC 4571), this protein is Large ribosomal subunit protein uL16.